The chain runs to 828 residues: Periplasmic nitrate reductase (828 aa).

A signal peptide (tat-type signal) is located at residues 1–31 (MKLSRRSFMKANAVAAVAAAAGLSVPGVARA). Residues 39 to 95 (IKWDKAPCRFCGTGCGVLVGTQQGRVVACQGDPDAPVNRGLNCIKGYFLPKIMYGKD) form the 4Fe-4S Mo/W bis-MGD-type domain. C46, C49, C53, and C81 together coordinate [4Fe-4S] cluster. Residues K83, Q150, N175, C179, 212 to 219 (WGANMAEM), 243 to 247 (STYQH), 262 to 264 (QSD), M372, Q376, N482, 508 to 509 (SD), K531, D558, and 718 to 727 (TGRVLEHWHT) each bind Mo-bis(molybdopterin guanine dinucleotide). F794 serves as a coordination point for substrate. The Mo-bis(molybdopterin guanine dinucleotide) site is built by N802 and K819.

The protein belongs to the prokaryotic molybdopterin-containing oxidoreductase family. NasA/NapA/NarB subfamily. Component of the periplasmic nitrate reductase NapAB complex composed of NapA and NapB. Requires [4Fe-4S] cluster as cofactor. Mo-bis(molybdopterin guanine dinucleotide) is required as a cofactor. In terms of processing, predicted to be exported by the Tat system. The position of the signal peptide cleavage has not been experimentally proven.

It localises to the periplasm. The enzyme catalyses 2 Fe(II)-[cytochrome] + nitrate + 2 H(+) = 2 Fe(III)-[cytochrome] + nitrite + H2O. Functionally, catalytic subunit of the periplasmic nitrate reductase complex NapAB. Receives electrons from NapB and catalyzes the reduction of nitrate to nitrite. The chain is Periplasmic nitrate reductase from Shigella boydii serotype 4 (strain Sb227).